Reading from the N-terminus, the 209-residue chain is Large ribosomal subunit protein uL3 (209 aa).

The disordered stretch occupies residues 127 to 166; it reads NFGGGSRTHGQSDRLRAPGSVGGSSDPSRTFKGTRMAGRM.

It belongs to the universal ribosomal protein uL3 family. In terms of assembly, part of the 50S ribosomal subunit. Forms a cluster with proteins L14 and L19.

One of the primary rRNA binding proteins, it binds directly near the 3'-end of the 23S rRNA, where it nucleates assembly of the 50S subunit. This chain is Large ribosomal subunit protein uL3, found in Chlorobaculum tepidum (strain ATCC 49652 / DSM 12025 / NBRC 103806 / TLS) (Chlorobium tepidum).